The sequence spans 252 residues: Thiazole synthase (252 aa).

The active-site Schiff-base intermediate with DXP is Lys91. 1-deoxy-D-xylulose 5-phosphate is bound by residues Gly152, 179-180 (AG), and 201-202 (NT).

It belongs to the ThiG family. In terms of assembly, homotetramer. Forms heterodimers with either ThiH or ThiS.

It localises to the cytoplasm. The catalysed reaction is [ThiS sulfur-carrier protein]-C-terminal-Gly-aminoethanethioate + 2-iminoacetate + 1-deoxy-D-xylulose 5-phosphate = [ThiS sulfur-carrier protein]-C-terminal Gly-Gly + 2-[(2R,5Z)-2-carboxy-4-methylthiazol-5(2H)-ylidene]ethyl phosphate + 2 H2O + H(+). The protein operates within cofactor biosynthesis; thiamine diphosphate biosynthesis. In terms of biological role, catalyzes the rearrangement of 1-deoxy-D-xylulose 5-phosphate (DXP) to produce the thiazole phosphate moiety of thiamine. Sulfur is provided by the thiocarboxylate moiety of the carrier protein ThiS. In vitro, sulfur can be provided by H(2)S. The chain is Thiazole synthase from Erwinia amylovora (Fire blight bacteria).